Reading from the N-terminus, the 37-residue chain is Turripeptide Lol6.2 (37 aa).

3 cysteine pairs are disulfide-bonded: C4/C16, C8/C21, and C15/C29.

Expressed by the venom duct.

The protein localises to the secreted. Functionally, acts as a neurotoxin by inhibiting an ion channel. This chain is Turripeptide Lol6.2, found in Iotyrris olangoensis (Sea snail).